Consider the following 81-residue polypeptide: ATP synthase subunit c, chloroplastic (81 aa).

A run of 2 helical transmembrane segments spans residues 3–23 (PLIS…ASIG) and 53–73 (LLLS…VALA).

Belongs to the ATPase C chain family. F-type ATPases have 2 components, F(1) - the catalytic core - and F(0) - the membrane proton channel. F(1) has five subunits: alpha(3), beta(3), gamma(1), delta(1), epsilon(1). F(0) has four main subunits: a(1), b(1), b'(1) and c(10-14). The alpha and beta chains form an alternating ring which encloses part of the gamma chain. F(1) is attached to F(0) by a central stalk formed by the gamma and epsilon chains, while a peripheral stalk is formed by the delta, b and b' chains.

The protein localises to the plastid. Its subcellular location is the chloroplast thylakoid membrane. In terms of biological role, f(1)F(0) ATP synthase produces ATP from ADP in the presence of a proton or sodium gradient. F-type ATPases consist of two structural domains, F(1) containing the extramembraneous catalytic core and F(0) containing the membrane proton channel, linked together by a central stalk and a peripheral stalk. During catalysis, ATP synthesis in the catalytic domain of F(1) is coupled via a rotary mechanism of the central stalk subunits to proton translocation. Key component of the F(0) channel; it plays a direct role in translocation across the membrane. A homomeric c-ring of between 10-14 subunits forms the central stalk rotor element with the F(1) delta and epsilon subunits. In Angiopteris evecta (Mule's foot fern), this protein is ATP synthase subunit c, chloroplastic.